Reading from the N-terminus, the 928-residue chain is Putative replication origin binding protein (928 aa).

A Helicase ATP-binding domain is found at 386 to 516 (NIVPPKGHIT…QVLRDILMTA (131 aa)). 399 to 406 (ASLGTGKT) is an ATP binding site. Residues 484–487 (DECD) carry the DEAD box motif.

Belongs to the herpesviridae oribp family.

Its function is as follows. Displays bipolar ssDNA and dsDNA unwinding activities that require the same core catalytic residues for unwinding in either direction, the 3'-5' direction being more robust. In Escherichia coli (Enterobacteria phage T5), this protein is Putative replication origin binding protein.